The primary structure comprises 444 residues: Phosphoglucosamine mutase (444 aa).

Catalysis depends on serine 104, which acts as the Phosphoserine intermediate. Mg(2+) is bound by residues serine 104, aspartate 243, aspartate 245, and aspartate 247. Position 104 is a phosphoserine (serine 104).

It belongs to the phosphohexose mutase family. Mg(2+) is required as a cofactor. Post-translationally, activated by phosphorylation.

It catalyses the reaction alpha-D-glucosamine 1-phosphate = D-glucosamine 6-phosphate. Its function is as follows. Catalyzes the conversion of glucosamine-6-phosphate to glucosamine-1-phosphate. This chain is Phosphoglucosamine mutase, found in Neisseria meningitidis serogroup C (strain 053442).